The sequence spans 380 residues: Cytochrome b (380 aa).

Transmembrane regions (helical) follow at residues 34-54 (FGSL…LLAT), 78-99 (WLIR…YLHI), 114-134 (WNTG…GYVL), and 179-199 (FFAL…THLT). The heme b site is built by His84 and His98. His183 and His197 together coordinate heme b. His202 contributes to the a ubiquinone binding site. The next 4 membrane-spanning stretches (helical) occupy residues 227–247 (PKDL…ALFS), 289–309 (LGGV…PFLH), 321–341 (LSQL…WVGS), and 348–368 (FIII…ILFP).

The protein belongs to the cytochrome b family. As to quaternary structure, the cytochrome bc1 complex contains 11 subunits: 3 respiratory subunits (MT-CYB, CYC1 and UQCRFS1), 2 core proteins (UQCRC1 and UQCRC2) and 6 low-molecular weight proteins (UQCRH/QCR6, UQCRB/QCR7, UQCRQ/QCR8, UQCR10/QCR9, UQCR11/QCR10 and a cleavage product of UQCRFS1). This cytochrome bc1 complex then forms a dimer. The cofactor is heme b.

The protein resides in the mitochondrion inner membrane. Functionally, component of the ubiquinol-cytochrome c reductase complex (complex III or cytochrome b-c1 complex) that is part of the mitochondrial respiratory chain. The b-c1 complex mediates electron transfer from ubiquinol to cytochrome c. Contributes to the generation of a proton gradient across the mitochondrial membrane that is then used for ATP synthesis. The polypeptide is Cytochrome b (MT-CYB) (Todus todus (Jamaican tody)).